The primary structure comprises 95 residues: Aspartyl/glutamyl-tRNA(Asn/Gln) amidotransferase subunit C (95 aa).

Residues 74 to 95 are disordered; sequence GQALEPAPDADNEHFLVPQVVE.

It belongs to the GatC family. In terms of assembly, heterotrimer of A, B and C subunits.

It catalyses the reaction L-glutamyl-tRNA(Gln) + L-glutamine + ATP + H2O = L-glutaminyl-tRNA(Gln) + L-glutamate + ADP + phosphate + H(+). The catalysed reaction is L-aspartyl-tRNA(Asn) + L-glutamine + ATP + H2O = L-asparaginyl-tRNA(Asn) + L-glutamate + ADP + phosphate + 2 H(+). In terms of biological role, allows the formation of correctly charged Asn-tRNA(Asn) or Gln-tRNA(Gln) through the transamidation of misacylated Asp-tRNA(Asn) or Glu-tRNA(Gln) in organisms which lack either or both of asparaginyl-tRNA or glutaminyl-tRNA synthetases. The reaction takes place in the presence of glutamine and ATP through an activated phospho-Asp-tRNA(Asn) or phospho-Glu-tRNA(Gln). This is Aspartyl/glutamyl-tRNA(Asn/Gln) amidotransferase subunit C from Salinibacter ruber (strain DSM 13855 / M31).